Consider the following 124-residue polypeptide: Fluoride-specific ion channel FluC (124 aa).

4 helical membrane passes run 1–21 (MLNTLVVFLGAGLGGALRYGV), 36–56 (TMIINVSGSLAMGILAGWFVV), 70–90 (TGILGGFTTFSTFSLEAFLLI), and 100–120 (LYVIGSVAAGIAGVAVSFAII). The Na(+) site is built by Gly-74 and Thr-77.

This sequence belongs to the fluoride channel Fluc/FEX (TC 1.A.43) family.

It is found in the cell inner membrane. The enzyme catalyses fluoride(in) = fluoride(out). Na(+) is not transported, but it plays an essential structural role and its presence is essential for fluoride channel function. Its function is as follows. Fluoride-specific ion channel. Important for reducing fluoride concentration in the cell, thus reducing its toxicity. This is Fluoride-specific ion channel FluC from Methylobacterium sp. (strain 4-46).